We begin with the raw amino-acid sequence, 315 residues long: tRNA uridine(34) hydroxylase (315 aa).

Residues 122–223 (SDPDVLVIDT…YLEQIPQPES (102 aa)) enclose the Rhodanese domain. Catalysis depends on Cys183, which acts as the Cysteine persulfide intermediate.

Belongs to the TrhO family.

It catalyses the reaction uridine(34) in tRNA + AH2 + O2 = 5-hydroxyuridine(34) in tRNA + A + H2O. Its function is as follows. Catalyzes oxygen-dependent 5-hydroxyuridine (ho5U) modification at position 34 in tRNAs. This chain is tRNA uridine(34) hydroxylase, found in Caulobacter vibrioides (strain ATCC 19089 / CIP 103742 / CB 15) (Caulobacter crescentus).